A 155-amino-acid polypeptide reads, in one-letter code: SsrA-binding protein (155 aa).

Belongs to the SmpB family.

It localises to the cytoplasm. In terms of biological role, required for rescue of stalled ribosomes mediated by trans-translation. Binds to transfer-messenger RNA (tmRNA), required for stable association of tmRNA with ribosomes. tmRNA and SmpB together mimic tRNA shape, replacing the anticodon stem-loop with SmpB. tmRNA is encoded by the ssrA gene; the 2 termini fold to resemble tRNA(Ala) and it encodes a 'tag peptide', a short internal open reading frame. During trans-translation Ala-aminoacylated tmRNA acts like a tRNA, entering the A-site of stalled ribosomes, displacing the stalled mRNA. The ribosome then switches to translate the ORF on the tmRNA; the nascent peptide is terminated with the 'tag peptide' encoded by the tmRNA and targeted for degradation. The ribosome is freed to recommence translation, which seems to be the essential function of trans-translation. The chain is SsrA-binding protein from Streptococcus pneumoniae (strain Hungary19A-6).